Consider the following 220-residue polypeptide: HTH-type transcriptional repressor GlaR (220 aa).

An HTH gntR-type domain is found at 1–69 (MTITSLDGYR…NQKGYRVASM (69 aa)). Positions 29 to 48 (MSLLTSRYALGVGPLREALS) form a DNA-binding region, H-T-H motif.

It localises to the cytoplasm. With respect to regulation, the repressive effect at the glaH promoter site is specifically relieved upon glutarate binding. In terms of biological role, negatively regulates the expression of the glaH-lhgD-gabDTP operon in a temporal manner during entry into stationary phase or during the first few hours of carbon starvation. Thereby is involved in the regulation of a L-lysine degradation pathway that proceeds via cadaverine, glutarate and L-2-hydroxyglutarate. Binds to two primary and two secondary sites in the promoter region of the glaH operon with the consensus sequences TTGTN5TTTT and ATGTN5TTTT of the primary sites, each separated by six nucleotides. This Escherichia coli (strain K12) protein is HTH-type transcriptional repressor GlaR.